The following is a 305-amino-acid chain: uncharacterized protein (305 aa).

Belongs to the ADP-ribosylglycohydrolase family.

This is an uncharacterized protein from Archaeoglobus fulgidus (strain ATCC 49558 / DSM 4304 / JCM 9628 / NBRC 100126 / VC-16).